A 260-amino-acid polypeptide reads, in one-letter code: Acetylglutamate kinase (260 aa).

Substrate is bound by residues 41-42, arginine 63, and asparagine 157; that span reads GG.

The protein belongs to the acetylglutamate kinase family. ArgB subfamily.

Its subcellular location is the cytoplasm. The enzyme catalyses N-acetyl-L-glutamate + ATP = N-acetyl-L-glutamyl 5-phosphate + ADP. It participates in amino-acid biosynthesis; L-arginine biosynthesis; N(2)-acetyl-L-ornithine from L-glutamate: step 2/4. Functionally, catalyzes the ATP-dependent phosphorylation of N-acetyl-L-glutamate. The sequence is that of Acetylglutamate kinase from Acidobacterium capsulatum (strain ATCC 51196 / DSM 11244 / BCRC 80197 / JCM 7670 / NBRC 15755 / NCIMB 13165 / 161).